The chain runs to 158 residues: Cyclic pyranopterin monophosphate synthase (158 aa).

Substrate contacts are provided by residues 75-77 (LCH) and 113-114 (ME). The active site involves Asp-128.

It belongs to the MoaC family. As to quaternary structure, homohexamer; trimer of dimers.

It carries out the reaction (8S)-3',8-cyclo-7,8-dihydroguanosine 5'-triphosphate = cyclic pyranopterin phosphate + diphosphate. Its pathway is cofactor biosynthesis; molybdopterin biosynthesis. In terms of biological role, catalyzes the conversion of (8S)-3',8-cyclo-7,8-dihydroguanosine 5'-triphosphate to cyclic pyranopterin monophosphate (cPMP). In Pasteurella multocida (strain Pm70), this protein is Cyclic pyranopterin monophosphate synthase.